A 98-amino-acid polypeptide reads, in one-letter code: NADH-ubiquinone oxidoreductase chain 4L (98 aa).

A run of 3 helical transmembrane segments spans residues 1–21 (MPII…GMLI), 29–49 (SLLC…LMAL), and 58–78 (IVPI…LALL).

The protein belongs to the complex I subunit 4L family. As to quaternary structure, core subunit of respiratory chain NADH dehydrogenase (Complex I) which is composed of 45 different subunits.

The protein localises to the mitochondrion inner membrane. The enzyme catalyses a ubiquinone + NADH + 5 H(+)(in) = a ubiquinol + NAD(+) + 4 H(+)(out). Its function is as follows. Core subunit of the mitochondrial membrane respiratory chain NADH dehydrogenase (Complex I) which catalyzes electron transfer from NADH through the respiratory chain, using ubiquinone as an electron acceptor. Part of the enzyme membrane arm which is embedded in the lipid bilayer and involved in proton translocation. This is NADH-ubiquinone oxidoreductase chain 4L (MT-ND4L) from Nasalis larvatus (Proboscis monkey).